A 476-amino-acid chain; its full sequence is UDP-N-acetylmuramate--L-alanine ligase (476 aa).

Residue 125–131 (GTHGKTT) coordinates ATP.

Belongs to the MurCDEF family.

The protein localises to the cytoplasm. It catalyses the reaction UDP-N-acetyl-alpha-D-muramate + L-alanine + ATP = UDP-N-acetyl-alpha-D-muramoyl-L-alanine + ADP + phosphate + H(+). It participates in cell wall biogenesis; peptidoglycan biosynthesis. Its function is as follows. Cell wall formation. The protein is UDP-N-acetylmuramate--L-alanine ligase of Actinobacillus succinogenes (strain ATCC 55618 / DSM 22257 / CCUG 43843 / 130Z).